The chain runs to 312 residues: Ribosomal protein L11 methyltransferase (312 aa).

S-adenosyl-L-methionine-binding residues include Thr-160, Gly-181, Asp-203, and Asn-246.

This sequence belongs to the methyltransferase superfamily. PrmA family.

It is found in the cytoplasm. It carries out the reaction L-lysyl-[protein] + 3 S-adenosyl-L-methionine = N(6),N(6),N(6)-trimethyl-L-lysyl-[protein] + 3 S-adenosyl-L-homocysteine + 3 H(+). Methylates ribosomal protein L11. This chain is Ribosomal protein L11 methyltransferase, found in Staphylococcus aureus (strain USA300).